The chain runs to 256 residues: Imidazole glycerol phosphate synthase subunit HisF (256 aa).

Residues aspartate 11 and aspartate 130 contribute to the active site.

Belongs to the HisA/HisF family. Heterodimer of HisH and HisF.

The protein localises to the cytoplasm. The catalysed reaction is 5-[(5-phospho-1-deoxy-D-ribulos-1-ylimino)methylamino]-1-(5-phospho-beta-D-ribosyl)imidazole-4-carboxamide + L-glutamine = D-erythro-1-(imidazol-4-yl)glycerol 3-phosphate + 5-amino-1-(5-phospho-beta-D-ribosyl)imidazole-4-carboxamide + L-glutamate + H(+). It participates in amino-acid biosynthesis; L-histidine biosynthesis; L-histidine from 5-phospho-alpha-D-ribose 1-diphosphate: step 5/9. IGPS catalyzes the conversion of PRFAR and glutamine to IGP, AICAR and glutamate. The HisF subunit catalyzes the cyclization activity that produces IGP and AICAR from PRFAR using the ammonia provided by the HisH subunit. This Cupriavidus necator (strain ATCC 17699 / DSM 428 / KCTC 22496 / NCIMB 10442 / H16 / Stanier 337) (Ralstonia eutropha) protein is Imidazole glycerol phosphate synthase subunit HisF.